We begin with the raw amino-acid sequence, 350 residues long: S-adenosylmethionine:tRNA ribosyltransferase-isomerase (350 aa).

The protein belongs to the QueA family. Monomer.

The protein resides in the cytoplasm. The enzyme catalyses 7-aminomethyl-7-carbaguanosine(34) in tRNA + S-adenosyl-L-methionine = epoxyqueuosine(34) in tRNA + adenine + L-methionine + 2 H(+). Its pathway is tRNA modification; tRNA-queuosine biosynthesis. Functionally, transfers and isomerizes the ribose moiety from AdoMet to the 7-aminomethyl group of 7-deazaguanine (preQ1-tRNA) to give epoxyqueuosine (oQ-tRNA). The polypeptide is S-adenosylmethionine:tRNA ribosyltransferase-isomerase (Bacillus cereus (strain Q1)).